A 465-amino-acid chain; its full sequence is tRNA modification GTPase MnmE (465 aa).

3 residues coordinate (6S)-5-formyl-5,6,7,8-tetrahydrofolate: Arg24, Glu84, and Lys127. The region spanning 223–383 (GLNIVLAGQP…LRGELLRLIG (161 aa)) is the TrmE-type G domain. Asn233 is a K(+) binding site. GTP-binding positions include 233 to 238 (NVGKSS), 252 to 258 (TAIAGTT), and 277 to 280 (DTAG). Ser237 is a binding site for Mg(2+). K(+) contacts are provided by Thr252, Ile254, and Thr257. Thr258 is a Mg(2+) binding site. Lys465 provides a ligand contact to (6S)-5-formyl-5,6,7,8-tetrahydrofolate.

This sequence belongs to the TRAFAC class TrmE-Era-EngA-EngB-Septin-like GTPase superfamily. TrmE GTPase family. Homodimer. Heterotetramer of two MnmE and two MnmG subunits. K(+) is required as a cofactor.

Its subcellular location is the cytoplasm. In terms of biological role, exhibits a very high intrinsic GTPase hydrolysis rate. Involved in the addition of a carboxymethylaminomethyl (cmnm) group at the wobble position (U34) of certain tRNAs, forming tRNA-cmnm(5)s(2)U34. The polypeptide is tRNA modification GTPase MnmE (Janthinobacterium sp. (strain Marseille) (Minibacterium massiliensis)).